The following is a 707-amino-acid chain: Translation initiation factor IF-2 (707 aa).

The span at Leu-55–Lys-80 shows a compositional bias: basic and acidic residues. A disordered region spans residues Leu-55–Tyr-88. Residues Pro-209–Lys-378 form the tr-type G domain. The G1 stretch occupies residues Gly-218–Thr-225. Gly-218–Thr-225 provides a ligand contact to GTP. The segment at Gly-243–His-247 is G2. Positions Asp-264–Gly-267 are G3. Residues Asp-264–His-268 and Asn-318–Asp-321 contribute to the GTP site. Positions Asn-318 to Asp-321 are G4. Residues Ser-354–Lys-356 are G5.

The protein belongs to the TRAFAC class translation factor GTPase superfamily. Classic translation factor GTPase family. IF-2 subfamily.

Its subcellular location is the cytoplasm. Its function is as follows. One of the essential components for the initiation of protein synthesis. Protects formylmethionyl-tRNA from spontaneous hydrolysis and promotes its binding to the 30S ribosomal subunits. Also involved in the hydrolysis of GTP during the formation of the 70S ribosomal complex. This chain is Translation initiation factor IF-2, found in Caldanaerobacter subterraneus subsp. tengcongensis (strain DSM 15242 / JCM 11007 / NBRC 100824 / MB4) (Thermoanaerobacter tengcongensis).